A 245-amino-acid chain; its full sequence is uncharacterized protein (245 aa).

The N-terminal stretch at 1–20 is a signal peptide; that stretch reads MIKQTIVALLLSVGASSVFA.

To E.coli YmcB.

This is an uncharacterized protein from Escherichia coli (strain K12).